Here is a 587-residue protein sequence, read N- to C-terminus: uncharacterized protein (587 aa).

The N-terminal stretch at methionine 1 to alanine 21 is a signal peptide. At leucine 22–arginine 541 the chain is on the lumenal side. A glycan (N-linked (GlcNAc...) asparagine) is linked at asparagine 25. A disordered region spans residues glycine 44 to phenylalanine 108. Basic and acidic residues predominate over residues arginine 63–aspartate 90. The segment covering alanine 91–phenylalanine 108 has biased composition (polar residues). Residues asparagine 163–methionine 331 enclose the SUN domain. 5 N-linked (GlcNAc...) asparagine glycosylation sites follow: asparagine 378, asparagine 381, asparagine 408, asparagine 448, and asparagine 486. Residues isoleucine 542 to glutamate 562 form a helical membrane-spanning segment. Residues leucine 563–arginine 587 are Cytoplasmic-facing.

The protein belongs to the SLP1 family. Interacts with EMP65.

The protein resides in the endoplasmic reticulum membrane. Functionally, may be involved in membrane protein folding. Required for localization of MPS3 to the nuclear envelope. This is an uncharacterized protein from Saccharomyces cerevisiae (strain ATCC 204508 / S288c) (Baker's yeast).